The primary structure comprises 1006 residues: D-2-hydroxyglutarate dehydrogenase (1006 aa).

The 233-residue stretch at 47-279 (YQRLPQAAVF…VEAKLNVLPI (233 aa)) folds into the FAD-binding PCMH-type domain. Residues arginine 397 and histidine 495 each coordinate (R)-2-hydroxyglutarate. The region spanning 655–687 (SHEVYDAMAGCLACKSCAGQCPIKVNVPDFRSR) is the 4Fe-4S ferredoxin-type domain. Cysteine 665, cysteine 668, cysteine 671, and cysteine 675 together coordinate [4Fe-4S] cluster.

The protein in the N-terminal section; belongs to the FAD-binding oxidoreductase/transferase type 4 family. It depends on [4Fe-4S] cluster as a cofactor. FAD is required as a cofactor.

The enzyme catalyses (R)-2-hydroxyglutarate + A = 2-oxoglutarate + AH2. Its pathway is amino-acid degradation. In terms of biological role, catalyzes the oxidation of D-2-hydroxyglutarate (D-2-HGA) to 2-oxoglutarate. Is involved in a D-lysine catabolic pathway. The chain is D-2-hydroxyglutarate dehydrogenase from Pseudomonas putida (strain ATCC 47054 / DSM 6125 / CFBP 8728 / NCIMB 11950 / KT2440).